The primary structure comprises 297 residues: Large ribosomal subunit protein uL18 (297 aa).

N-acetylglycine is present on Gly-2. An N6-acetyllysine mark is found at Lys-5 and Lys-48. At Ser-185 the chain carries Phosphoserine. N6-acetyllysine; alternate is present on Lys-220. Lys-220 participates in a covalent cross-link: Glycyl lysine isopeptide (Lys-Gly) (interchain with G-Cter in SUMO1); alternate. Residue Lys-220 forms a Glycyl lysine isopeptide (Lys-Gly) (interchain with G-Cter in SUMO2); alternate linkage. The residue at position 232 (Thr-232) is a Phosphothreonine. Residues 253–297 (YEKKPKREVKKKRWNRPKMSLAQKKDRVAQKKASFLRAQERAAES) form a disordered region. The span at 258-268 (KREVKKKRWNR) shows a compositional bias: basic residues. Phosphoserine is present on Ser-272.

The protein belongs to the universal ribosomal protein uL18 family. As to quaternary structure, component of the large ribosomal subunit (LSU). Part of the 5S RNP complex, which is a LSU subcomplex composed of the 5S RNA, RPL5 and RPL11. Component of a hexameric 5S RNP precursor complex, composed of 5S RNA, RRS1, RPF2/BXDC1, RPL5, RPL11 and HEATR3; this complex acts as a precursor for ribosome assembly. Interacts with NVL in an ATP-dependent manner. Interacts with RRP1B. Interacts with IPO5, IPO7 and KPNB1; these interactions may be involved in RPL5 nuclear import for the assembly of ribosomal subunits. Interacts with RRP1B.

The protein localises to the cytoplasm. The protein resides in the nucleus. It is found in the nucleolus. In terms of biological role, component of the ribosome, a large ribonucleoprotein complex responsible for the synthesis of proteins in the cell. The small ribosomal subunit (SSU) binds messenger RNAs (mRNAs) and translates the encoded message by selecting cognate aminoacyl-transfer RNA (tRNA) molecules. The large subunit (LSU) contains the ribosomal catalytic site termed the peptidyl transferase center (PTC), which catalyzes the formation of peptide bonds, thereby polymerizing the amino acids delivered by tRNAs into a polypeptide chain. The nascent polypeptides leave the ribosome through a tunnel in the LSU and interact with protein factors that function in enzymatic processing, targeting, and the membrane insertion of nascent chains at the exit of the ribosomal tunnel. As part of the 5S RNP/5S ribonucleoprotein particle it is an essential component of the LSU, required for its formation and the maturation of rRNAs. It also couples ribosome biogenesis to p53/TP53 activation. As part of the 5S RNP it accumulates in the nucleoplasm and inhibits MDM2, when ribosome biogenesis is perturbed, mediating the stabilization and the activation of TP53. The chain is Large ribosomal subunit protein uL18 (Rpl5) from Rattus norvegicus (Rat).